The chain runs to 209 residues: High frequency lysogenization protein HflD homolog (209 aa).

A coiled-coil region spans residues 79–121 (QGLNAELTRYTLSLMVLERKLNSAKGAMDTLGDRIAGLQRQLD).

This sequence belongs to the HflD family.

It localises to the cytoplasm. The protein localises to the cell inner membrane. This Enterobacter sp. (strain 638) protein is High frequency lysogenization protein HflD homolog.